We begin with the raw amino-acid sequence, 128 residues long: uncharacterized protein (128 aa).

The region spanning 5-128 is the VOC domain; it reads SIHHIAIICS…DQLPLELYEQ (124 aa). A divalent metal cation-binding residues include His-8, Glu-56, His-77, and Glu-124.

This is an uncharacterized protein from Bacillus subtilis (strain 168).